A 365-amino-acid chain; its full sequence is Isopentenyl-diphosphate delta-isomerase (365 aa).

8-9 serves as a coordination point for substrate; sequence RK. Residues 67–69, serine 97, and asparagine 126 contribute to the FMN site; that span reads SIT. 97 to 99 contacts substrate; it reads SQR. Residue glutamine 160 coordinates substrate. Position 161 (glutamate 161) interacts with Mg(2+). FMN-binding positions include lysine 192, threonine 222, 272–274, and 293–294; these read GIR and AL.

The protein belongs to the IPP isomerase type 2 family. In terms of assembly, homooctamer. Dimer of tetramers. It depends on FMN as a cofactor. NADPH serves as cofactor. The cofactor is Mg(2+).

The protein localises to the cytoplasm. The catalysed reaction is isopentenyl diphosphate = dimethylallyl diphosphate. Its function is as follows. Involved in the biosynthesis of isoprenoids. Catalyzes the 1,3-allylic rearrangement of the homoallylic substrate isopentenyl (IPP) to its allylic isomer, dimethylallyl diphosphate (DMAPP). The protein is Isopentenyl-diphosphate delta-isomerase of Methanosarcina barkeri (strain Fusaro / DSM 804).